Reading from the N-terminus, the 148-residue chain is IQ domain-containing protein F5 (148 aa).

2 IQ domains span residues 11-40 and 67-96; these read ETSA…SAWI and KTWA…AVRI.

The sequence is that of IQ domain-containing protein F5 (Iqcf5) from Mus musculus (Mouse).